The chain runs to 256 residues: Zinc import ATP-binding protein ZnuC (256 aa).

An ABC transporter domain is found at 6 to 221 (IAAEGLSIRV…PEYRALFGTG (216 aa)). 38–45 (GPNGSGKS) contributes to the ATP binding site. Residues 237 to 256 (HDDDCGHDHGAEHMHPHGDR) are disordered.

It belongs to the ABC transporter superfamily. Zinc importer (TC 3.A.1.15.5) family. The complex is composed of two ATP-binding proteins (ZnuC), two transmembrane proteins (ZnuB) and a solute-binding protein (ZnuA).

It localises to the cell inner membrane. It catalyses the reaction Zn(2+)(out) + ATP(in) + H2O(in) = Zn(2+)(in) + ADP(in) + phosphate(in) + H(+)(in). Functionally, part of the ABC transporter complex ZnuABC involved in zinc import. Responsible for energy coupling to the transport system. The sequence is that of Zinc import ATP-binding protein ZnuC from Ruegeria pomeroyi (strain ATCC 700808 / DSM 15171 / DSS-3) (Silicibacter pomeroyi).